The chain runs to 215 residues: S-crystallin 4 (215 aa).

In terms of domain architecture, GST N-terminal spans 2-80 (PSYTLHYFNH…YLAREFGFHG (79 aa)). The GST C-terminal domain maps to 82–215 (NNMDMARVDY…YLQKRSRTEF (134 aa)).

The protein belongs to the GST superfamily. As to expression, lens.

Functionally, S-crystallins are structural components of squids and octopi eye lens. Contains relatively little if any GST activity. This Enteroctopus dofleini (North Pacific giant octopus) protein is S-crystallin 4.